The sequence spans 373 residues: Histidinol-phosphate aminotransferase (373 aa).

At lysine 230 the chain carries N6-(pyridoxal phosphate)lysine.

Belongs to the class-II pyridoxal-phosphate-dependent aminotransferase family. Histidinol-phosphate aminotransferase subfamily. As to quaternary structure, homodimer. Pyridoxal 5'-phosphate is required as a cofactor.

The enzyme catalyses L-histidinol phosphate + 2-oxoglutarate = 3-(imidazol-4-yl)-2-oxopropyl phosphate + L-glutamate. The protein operates within amino-acid biosynthesis; L-histidine biosynthesis; L-histidine from 5-phospho-alpha-D-ribose 1-diphosphate: step 7/9. The sequence is that of Histidinol-phosphate aminotransferase from Synechococcus elongatus (strain ATCC 33912 / PCC 7942 / FACHB-805) (Anacystis nidulans R2).